We begin with the raw amino-acid sequence, 182 residues long: Peptidyl-tRNA hydrolase (182 aa).

A tRNA-binding site is contributed by Y14. H19 serves as the catalytic Proton acceptor. The tRNA site is built by F64, N66, and N112.

It belongs to the PTH family. Monomer.

It localises to the cytoplasm. The catalysed reaction is an N-acyl-L-alpha-aminoacyl-tRNA + H2O = an N-acyl-L-amino acid + a tRNA + H(+). Hydrolyzes ribosome-free peptidyl-tRNAs (with 1 or more amino acids incorporated), which drop off the ribosome during protein synthesis, or as a result of ribosome stalling. Its function is as follows. Catalyzes the release of premature peptidyl moieties from peptidyl-tRNA molecules trapped in stalled 50S ribosomal subunits, and thus maintains levels of free tRNAs and 50S ribosomes. The polypeptide is Peptidyl-tRNA hydrolase (Wolbachia sp. subsp. Brugia malayi (strain TRS)).